The chain runs to 385 residues: MNKVNKINAYTCSSFQLHTIMKISFYVVERGFELAAFFTRRTIWIIISILLFLVAAYFILPVSLPLVAALLTALILTPAVNALQRKTKIKRNVAVMLVFTVFVVFIGLSGYYIATKAITQGTQIVENSPQYISDINRAWLNFQRNLEEKYENLPPELVQEINITVTNTLSDLRSNISDRNLIQDITSLISSIPGYLVTFLVYLIALFLFMLELPRLREKLYSYLSERTKEKVNFMTSRLSYVIWGFFKAQFLVSIIIFIVTLIGLLFIAPEVALLMAFIIWLIDFVPIIGSIVILAPWAIFQLIVGDVSTGSKLLILAAVLLIIRRTVEPKVMGKHIGLSPLATLIAMYLGLMLFGVIGFIIGPLLVIAFTSAKEAGIIKLNFKL.

8 consecutive transmembrane segments (helical) span residues Thr-42 to Val-62, Ser-63 to Leu-83, Val-93 to Ile-113, Ser-191 to Leu-211, Ile-255 to Leu-275, Met-276 to Ala-296, Ile-304 to Ile-324, and Leu-350 to Phe-370.

It belongs to the autoinducer-2 exporter (AI-2E) (TC 2.A.86) family.

It is found in the cell membrane. The chain is Putative transport protein BpOF4_00890 from Alkalihalophilus pseudofirmus (strain ATCC BAA-2126 / JCM 17055 / OF4) (Bacillus pseudofirmus).